The following is a 422-amino-acid chain: Putative nickel insertion protein (422 aa).

This sequence belongs to the LarC family.

In Synechocystis sp. (strain ATCC 27184 / PCC 6803 / Kazusa), this protein is Putative nickel insertion protein.